A 1269-amino-acid polypeptide reads, in one-letter code: Regulator of nonsense transcripts 2 (1269 aa).

Disordered regions lie at residues Met-1–Glu-125 and Leu-143–Arg-162. The stretch at Lys-57–Ala-133 forms a coiled coil. Positions Lys-94–Glu-132 are sufficient for interaction with UPF1. The region spanning Lys-168–Lys-396 is the MIF4G 1 domain. Disordered stretches follow at residues Asn-422–Thr-444 and Lys-487–Leu-518. Composition is skewed to basic and acidic residues over residues Pro-427 to Pro-438 and Lys-487 to Ser-511. 2 MIF4G domains span residues Gln-571–Pro-755 and Arg-774–Lys-984. The sufficient for interaction with UPF3A and UPF3B stretch occupies residues Gly-709–Thr-926. The interval Pro-755 to Arg-1269 is sufficient for interaction with EIF4A1 and EIF1. The segment at Glu-837 to Val-857 is binds to UPF3B. Residues Ser-1017–Ala-1090 form a disordered region. Residues Glu-1025 to Thr-1073 are compositionally biased toward acidic residues. The sufficient for interaction with UPF1 C-terminus stretch occupies residues Lys-1081–Arg-1269. Position 1085 is a phosphothreonine (Thr-1085). Interaction with UPF1 stretches follow at residues Val-1102–Ser-1126 and Asp-1164–Glu-1204. Residues Val-1102–His-1195 form a necessary for interaction with UPF1 region. Residues Glu-1218–Arg-1269 are disordered.

As to quaternary structure, found in a post-splicing messenger ribonucleoprotein (mRNP) complex. Associates with the exon junction complex (EJC). Interacts with SMG1, EST1A, UPF3A, UPF3B, EIF4A1 and EIF1. Interacts with UPF1; interaction is promoted by TDRD6. Interacts with DDX4. As to expression, localized in male germ cells.

It is found in the cytoplasm. The protein localises to the perinuclear region. Involved in nonsense-mediated decay (NMD) of mRNAs containing premature stop codons by associating with the nuclear exon junction complex (EJC). Recruited by UPF3B associated with the EJC core at the cytoplasmic side of the nuclear envelope and the subsequent formation of an UPF1-UPF2-UPF3 surveillance complex (including UPF1 bound to release factors at the stalled ribosome) is believed to activate NMD. In cooperation with UPF3B stimulates both ATPase and RNA helicase activities of UPF1. Binds spliced mRNA. This is Regulator of nonsense transcripts 2 from Mus musculus (Mouse).